The sequence spans 213 residues: N-(5'-phosphoribosyl)anthranilate isomerase (213 aa).

Belongs to the TrpF family.

The enzyme catalyses N-(5-phospho-beta-D-ribosyl)anthranilate = 1-(2-carboxyphenylamino)-1-deoxy-D-ribulose 5-phosphate. It participates in amino-acid biosynthesis; L-tryptophan biosynthesis; L-tryptophan from chorismate: step 3/5. The protein is N-(5'-phosphoribosyl)anthranilate isomerase of Methanocella arvoryzae (strain DSM 22066 / NBRC 105507 / MRE50).